An 87-amino-acid chain; its full sequence is Small ribosomal subunit protein bS20 (87 aa).

The interval 1-26 (MANIKSAKKRAIQSEKRRKHNASRRS) is disordered.

The protein belongs to the bacterial ribosomal protein bS20 family.

Binds directly to 16S ribosomal RNA. The sequence is that of Small ribosomal subunit protein bS20 from Photorhabdus laumondii subsp. laumondii (strain DSM 15139 / CIP 105565 / TT01) (Photorhabdus luminescens subsp. laumondii).